The sequence spans 103 residues: Urease subunit beta (103 aa).

It belongs to the urease beta subunit family. In terms of assembly, heterotrimer of UreA (gamma), UreB (beta) and UreC (alpha) subunits. Three heterotrimers associate to form the active enzyme.

It localises to the cytoplasm. It carries out the reaction urea + 2 H2O + H(+) = hydrogencarbonate + 2 NH4(+). It functions in the pathway nitrogen metabolism; urea degradation; CO(2) and NH(3) from urea (urease route): step 1/1. The protein is Urease subunit beta of Blochmanniella floridana.